A 116-amino-acid chain; its full sequence is Putative RNase MJ0125 (116 aa).

Catalysis depends on residues Arg-76 and His-81. Residues 76 to 83 carry the RX(4)HXY motif motif; that stretch reads RDKLIHQY. At Tyr-83 the chain carries O-di-AMP-tyrosine.

This sequence belongs to the HepT RNase toxin family. Homodimer, probably forms a complex with cognate antitoxin MJ0126. Post-translationally, modified by cognate antitoxin MJ0126; probably at least 2 successive AMPylation events occur on Tyr-83.

Probable toxic component of a putative type VII toxin-antitoxin (TA) system, probably an RNase. Probably neutralized by cognate antitoxin MJ0126. Neutralization may be due to AMPylation by MJ0126. In Methanocaldococcus jannaschii (strain ATCC 43067 / DSM 2661 / JAL-1 / JCM 10045 / NBRC 100440) (Methanococcus jannaschii), this protein is Putative RNase MJ0125.